A 251-amino-acid polypeptide reads, in one-letter code: Imidazole glycerol phosphate synthase subunit HisF (251 aa).

Catalysis depends on residues Asp-11 and Asp-130.

It belongs to the HisA/HisF family. Heterodimer of HisH and HisF.

The protein resides in the cytoplasm. It carries out the reaction 5-[(5-phospho-1-deoxy-D-ribulos-1-ylimino)methylamino]-1-(5-phospho-beta-D-ribosyl)imidazole-4-carboxamide + L-glutamine = D-erythro-1-(imidazol-4-yl)glycerol 3-phosphate + 5-amino-1-(5-phospho-beta-D-ribosyl)imidazole-4-carboxamide + L-glutamate + H(+). The protein operates within amino-acid biosynthesis; L-histidine biosynthesis; L-histidine from 5-phospho-alpha-D-ribose 1-diphosphate: step 5/9. Functionally, IGPS catalyzes the conversion of PRFAR and glutamine to IGP, AICAR and glutamate. The HisF subunit catalyzes the cyclization activity that produces IGP and AICAR from PRFAR using the ammonia provided by the HisH subunit. The chain is Imidazole glycerol phosphate synthase subunit HisF from Chlorobium luteolum (strain DSM 273 / BCRC 81028 / 2530) (Pelodictyon luteolum).